A 296-amino-acid chain; its full sequence is Acetyl-coenzyme A carboxylase carboxyl transferase subunit beta (296 aa).

Positions 25 to 294 (LWIKDPSTGE…NSDAPAPPEA (270 aa)) constitute a CoA carboxyltransferase N-terminal domain.

Belongs to the AccD/PCCB family. As to quaternary structure, acetyl-CoA carboxylase is a heterohexamer composed of biotin carboxyl carrier protein (AccB), biotin carboxylase (AccC) and two subunits each of ACCase subunit alpha (AccA) and ACCase subunit beta (AccD).

The protein localises to the cytoplasm. The enzyme catalyses N(6)-carboxybiotinyl-L-lysyl-[protein] + acetyl-CoA = N(6)-biotinyl-L-lysyl-[protein] + malonyl-CoA. It participates in lipid metabolism; malonyl-CoA biosynthesis; malonyl-CoA from acetyl-CoA: step 1/1. Functionally, component of the acetyl coenzyme A carboxylase (ACC) complex. Biotin carboxylase (BC) catalyzes the carboxylation of biotin on its carrier protein (BCCP) and then the CO(2) group is transferred by the transcarboxylase to acetyl-CoA to form malonyl-CoA. This chain is Acetyl-coenzyme A carboxylase carboxyl transferase subunit beta, found in Brucella ovis (strain ATCC 25840 / 63/290 / NCTC 10512).